The chain runs to 86 residues: Allergen Api g 5 (86 aa).

Asparagine 62 carries an N-linked (GlcNAc...) asparagine glycan.

The protein belongs to the oxygen-dependent FAD-linked oxidoreductase family. Requires FAD as cofactor. Post-translationally, carries MUXF and MMXF, two complex N-linked glycans with alpha-1,3-fucose and beta-1,2-xylose residues in their structures. MMXF is added to Asn-62.

The sequence is that of Allergen Api g 5 from Apium graveolens (Celery).